The chain runs to 259 residues: Probable transcriptional regulatory protein Noca_2383 (259 aa).

It belongs to the TACO1 family.

Its subcellular location is the cytoplasm. The polypeptide is Probable transcriptional regulatory protein Noca_2383 (Nocardioides sp. (strain ATCC BAA-499 / JS614)).